A 34-amino-acid chain; its full sequence is Jingzhaotoxin F7-10.36 (34 aa).

3 disulfides stabilise this stretch: Cys-2-Cys-17, Cys-9-Cys-22, and Cys-16-Cys-29.

Belongs to the neurotoxin 10 (Hwtx-1) family. 50 (Jztz-F7) subfamily. As to expression, expressed by the venom gland.

It localises to the secreted. Functionally, probable ion channel inhibitor. In Chilobrachys guangxiensis (Chinese earth tiger tarantula), this protein is Jingzhaotoxin F7-10.36.